The following is a 424-amino-acid chain: Serine hydroxymethyltransferase (424 aa).

Residues L118 and G122–L124 each bind (6S)-5,6,7,8-tetrahydrofolate. K227 carries the N6-(pyridoxal phosphate)lysine modification. S351–F353 serves as a coordination point for (6S)-5,6,7,8-tetrahydrofolate.

Belongs to the SHMT family. Homodimer. Pyridoxal 5'-phosphate serves as cofactor.

The protein localises to the cytoplasm. It carries out the reaction (6R)-5,10-methylene-5,6,7,8-tetrahydrofolate + glycine + H2O = (6S)-5,6,7,8-tetrahydrofolate + L-serine. Its pathway is one-carbon metabolism; tetrahydrofolate interconversion. The protein operates within amino-acid biosynthesis; glycine biosynthesis; glycine from L-serine: step 1/1. Its function is as follows. Catalyzes the reversible interconversion of serine and glycine with tetrahydrofolate (THF) serving as the one-carbon carrier. This reaction serves as the major source of one-carbon groups required for the biosynthesis of purines, thymidylate, methionine, and other important biomolecules. Also exhibits THF-independent aldolase activity toward beta-hydroxyamino acids, producing glycine and aldehydes, via a retro-aldol mechanism. In Thermosipho melanesiensis (strain DSM 12029 / CIP 104789 / BI429), this protein is Serine hydroxymethyltransferase.